A 325-amino-acid polypeptide reads, in one-letter code: UDP-N-acetylglucosamine transporter ROCK1 (325 aa).

Residues 1–13 lie on the Cytoplasmic side of the membrane; the sequence is MATANGAKSPSSM. Residues 14–34 form a helical membrane-spanning segment; the sequence is GPKVLFYSILLTLQYGAQPLI. The Lumenal segment spans residues 35-42; sequence SKRCIRKD. Residues 43-63 traverse the membrane as a helical segment; sequence VIVTSSVLTCEIVKVICALIL. Topologically, residues 64 to 109 are cytoplasmic; the sequence is MARNGSLKGLAKEWTLMGSLTASGLPAAIYALQNSLLQISYRSLDS. Residues 110-130 traverse the membrane as a helical segment; that stretch reads LTFSILNQTKIFFTAFFTFII. The Lumenal portion of the chain corresponds to 131–135; it reads LRQKQ. Residues 136–156 form a helical membrane-spanning segment; that stretch reads SILQIGALCLLIMAAVLLSVG. At 157–171 the chain is on the cytoplasmic side; that stretch reads EGSNKDSSGINADQK. Residues 172 to 192 traverse the membrane as a helical segment; that stretch reads LFYGIIPVLAASVLSGLASSL. The Lumenal segment spans residues 193–203; it reads CQWASQVKKHS. The chain crosses the membrane as a helical span at residues 204-224; that stretch reads SYLMTVEMSIVGSLCLLVSTL. At 225–241 the chain is on the cytoplasmic side; the sequence is KSPDGEAIKKYGFFHGW. Residues 242-262 traverse the membrane as a helical segment; that stretch reads TALTLVPVISNALGGILVGLV. Over 263-270 the chain is Lumenal; it reads TSHAGGVR. The chain crosses the membrane as a helical span at residues 271-291; it reads KGFVIVSALLVTALLQFAFEG. Residues 292–325 are Cytoplasmic-facing; that stretch reads KPPSSYCLVALPLVMSSISMYQKYPYIDKKKKKV.

It belongs to the nucleotide-sugar transporter family. CMP-Sialate:CMP antiporter (TC 2.A.7.12) subfamily. As to expression, expressed in roots, cotyledons, leaves, stems, flowers and siliques.

The protein localises to the endoplasmic reticulum membrane. Its function is as follows. Mediates the transport of UDP-linked acetylated hexosamines across the endoplasmic reticulum (ER) membrane. Facilitates UDP-N-acetylglucosamine (UDP-GlcNAc) and UDP-N-acetylgalactosamine (UDP-GalNAc) transport. Regulates the cytokinin signal in meristematic cells through modulating activity of cytokinin oxidases/dehydrogenases. Part of the ER quality control system, which determines the fate of aberrant proteins in the secretory pathway. The sequence is that of UDP-N-acetylglucosamine transporter ROCK1 from Arabidopsis thaliana (Mouse-ear cress).